The sequence spans 314 residues: E3 ubiquitin-protein ligase CHIP (314 aa).

Residues 1 to 11 (MKGKEEREREG) are compositionally biased toward basic and acidic residues. The interval 1–47 (MKGKEEREREGGGGAVGPGAAGPGAGGGSPEKSHSAQEHKEQGNRLF) is disordered. Positions 12–29 (GGGAVGPGAAGPGAGGGS) are enriched in gly residues. A compositionally biased stretch (basic and acidic residues) spans 31-43 (EKSHSAQEHKEQG). TPR repeat units follow at residues 36–69 (AQEH…NPLV), 70–103 (AVYY…DGQS), and 105–137 (KAHF…AKEQ). In terms of domain architecture, U-box spans 237 to 311 (DIPDYLCGKI…DAFISENGWV (75 aa)).

In terms of assembly, homodimer.

It is found in the cytoplasm. Its subcellular location is the nucleus. The protein resides in the mitochondrion. The catalysed reaction is S-ubiquitinyl-[E2 ubiquitin-conjugating enzyme]-L-cysteine + [acceptor protein]-L-lysine = [E2 ubiquitin-conjugating enzyme]-L-cysteine + N(6)-ubiquitinyl-[acceptor protein]-L-lysine.. E3 ubiquitin-protein ligase which targets misfolded chaperone substrates towards proteasomal degradation. Collaborates with ATXN3 in the degradation of misfolded chaperone substrates: ATXN3 restricting the length of ubiquitin chain attached to STUB1/CHIP substrates and preventing further chain extension. The chain is E3 ubiquitin-protein ligase CHIP from Gallus gallus (Chicken).